A 706-amino-acid polypeptide reads, in one-letter code: Cyclic nucleotide-gated ion channel 18 (706 aa).

Residues Met1–His53 are Cytoplasmic-facing. A helical membrane pass occupies residues Val54–Tyr74. Topologically, residues Val75–Ser86 are extracellular. The helical transmembrane segment at Leu87 to Phe107 threads the bilayer. The Cytoplasmic portion of the chain corresponds to Met108 to Asp142. The chain crosses the membrane as a helical span at residues Phe143–Pro163. Over Ala164–Asn174 the chain is Extracellular. Residues Ser175–Leu195 form a helical membrane-spanning segment. Topologically, residues Asn196–Asn217 are cytoplasmic. The helical transmembrane segment at Leu218–Gly238 threads the bilayer. The Extracellular portion of the chain corresponds to Arg239 to Thr345. A helical transmembrane segment spans residues Leu346–Met366. At Gln367–Val706 the chain is on the cytoplasmic side. Residues Phe449 to Tyr579 and Glu520 contribute to the a nucleoside 3',5'-cyclic phosphate site. The segment at Phe565 to Tyr580 is calmodulin-binding. The IQ domain maps to Arg585 to Ser614. The disordered stretch occupies residues Ala661–Val706. The span at Lys693–Val706 shows a compositional bias: basic and acidic residues.

It belongs to the cyclic nucleotide-gated cation channel (TC 1.A.1.5) family. In terms of assembly, homomultimer. Interacts with CPK32. In terms of tissue distribution, expressed in pollen grains. Not detected in leaves, roots or root hairs.

It is found in the cell membrane. Its subcellular location is the cytoplasmic vesicle membrane. Its function is as follows. Cyclic nucleotide-gated ion channel required for directional pollen tube growth into the transmitting tract. Acts as a Ca(2+)-permeable divalent cation-selective channel inhibited by either lanthanum or gadolinium. Regulated by CPK32 to mediate Ca(2+) transport across the plasma membrane in response to Ca(2+) oscillation. This is Cyclic nucleotide-gated ion channel 18 from Arabidopsis thaliana (Mouse-ear cress).